We begin with the raw amino-acid sequence, 336 residues long: tRNA-modifying protein YgfZ (336 aa).

Positions 28 and 191 each coordinate folate.

The protein belongs to the tRNA-modifying YgfZ family.

Its subcellular location is the cytoplasm. Folate-binding protein involved in regulating the level of ATP-DnaA and in the modification of some tRNAs. It is probably a key factor in regulatory networks that act via tRNA modification, such as initiation of chromosomal replication. The sequence is that of tRNA-modifying protein YgfZ from Hamiltonella defensa subsp. Acyrthosiphon pisum (strain 5AT).